The primary structure comprises 169 residues: Centrosomal protein 20 (169 aa).

The segment at 1–104 is necessary and sufficient for homooligomerization and localization to centrosomes and pericentriolar satellites; the sequence is MATVGDLKAV…VVEDLNSQSV (104 aa). The LisH domain maps to 49–81; the sequence is ENLLINELIREYLAFNKYSYTSSVLTAETGLSE. The tract at residues 135-169 is disordered; it reads TFRNIPRGRNTKDTHSGPVQLTQTSTEDWHQRRHR. Positions 151 to 160 are enriched in polar residues; that stretch reads GPVQLTQTST.

Belongs to the CEP43 family. As to quaternary structure, homooligomer; probably required for localization to centrosomes.

Its subcellular location is the cell projection. The protein localises to the cilium. It localises to the cytoplasm. It is found in the cytoskeleton. The protein resides in the cilium basal body. Its subcellular location is the microtubule organizing center. The protein localises to the centrosome. It localises to the cytoplasmic granule. It is found in the centriolar satellite. In terms of biological role, involved in the biogenesis of cilia. Required for the recruitment of PLK1 to centrosomes and S phase progression. The chain is Centrosomal protein 20 (Cep20) from Xenopus laevis (African clawed frog).